Here is a 125-residue protein sequence, read N- to C-terminus: MTNLLEKFNEQQIQRLAKEMPAFCPGDDLKVTFKVVDSTGERIQIFEGVCISKRNRGLHSSFSVRKVSHGESIVSQFFVYSPALISVQVMRKGKVRRAKLYYLCKLFGKAARIKERTTYVKKKSK.

It belongs to the bacterial ribosomal protein bL19 family.

Its function is as follows. This protein is located at the 30S-50S ribosomal subunit interface and may play a role in the structure and function of the aminoacyl-tRNA binding site. The chain is Large ribosomal subunit protein bL19 from Wolbachia pipientis subsp. Culex pipiens (strain wPip).